A 561-amino-acid chain; its full sequence is Septation ring formation regulator EzrA (561 aa).

The Extracellular portion of the chain corresponds to 1-3 (MWI). A helical membrane pass occupies residues 4 to 22 (VVFSLLVLTVTFFVYGALR). The Cytoplasmic segment spans residues 23-561 (RKAFYKRVDK…VLEKVQHLAG (539 aa)). 3 coiled-coil regions span residues 98–130 (RFQK…IQVL), 166–214 (AKVF…HLLK), and 251–465 (FAID…KLSD).

It belongs to the EzrA family.

It localises to the cell membrane. Functionally, negative regulator of FtsZ ring formation; modulates the frequency and position of FtsZ ring formation. Inhibits FtsZ ring formation at polar sites. Interacts either with FtsZ or with one of its binding partners to promote depolymerization. The protein is Septation ring formation regulator EzrA of Halalkalibacterium halodurans (strain ATCC BAA-125 / DSM 18197 / FERM 7344 / JCM 9153 / C-125) (Bacillus halodurans).